A 202-amino-acid chain; its full sequence is Small ribosomal subunit protein uS4c (202 aa).

The S4 RNA-binding domain maps to 90-153 (MRLDNVIFRL…KSETIISKNI (64 aa)).

It belongs to the universal ribosomal protein uS4 family. In terms of assembly, part of the 30S ribosomal subunit. Contacts protein S5. The interaction surface between S4 and S5 is involved in control of translational fidelity.

The protein resides in the plastid. Its subcellular location is the chloroplast. Its function is as follows. One of the primary rRNA binding proteins, it binds directly to 16S rRNA where it nucleates assembly of the body of the 30S subunit. With S5 and S12 plays an important role in translational accuracy. This Arbusculohypopterygium arbuscula (Moss) protein is Small ribosomal subunit protein uS4c (rps4).